The chain runs to 509 residues: MKEYQVYLERARSRQQDFLYPLIFREYIYGLAYSQNFKRSSFVENLGYDSKYSLLIVKRLISRMYQQNHLIISANDSNKNPFWGYNKNFNSQIISEGFAIVVEIPFFLQSGSSLKESEIIKSYKNLRSIHSVFPFLEDKFTYLNYVSDIRIPYPIHLEILVQILRYWVKDAPFFHLLRLFVYNFCNWNSFITTKKSIYTFSKSNPRLFLFLYNFYVWEYESIFLFLRNKSSHLRLKSFSVFFERIFFYAKREHLVEVFAKDFPYTLKFFKDPLIHYVRYQGKSILASRNAPILMNKWKHYFLHLWQCFFDVWSQPGTIKINQLSQHSFQLLGYFSNVRLNRSVVRSHMLQNTFLIEIVRKKLDIIVPIIPLIRSLAKGKFCNVLGHPISKPVWADSSDLDIIDRFLRICRNLSHYYNGSSKKKSLYQIKYILRLSCIKTLACKHKSTVRAFLKRSGSEELLEEFFTEEEEILSFIFPRDSSTLQRLHRNRINRIWYLDILFSNDLVNHE.

The protein belongs to the intron maturase 2 family. MatK subfamily.

Its subcellular location is the plastid. The protein resides in the chloroplast. Its function is as follows. Usually encoded in the trnK tRNA gene intron. Probably assists in splicing its own and other chloroplast group II introns. This Cicer arietinum (Chickpea) protein is Maturase K.